An 807-amino-acid chain; its full sequence is Spondin-1 (807 aa).

An N-terminal signal peptide occupies residues 1-28 (MRLSPAPLRLSRGPALLALALPLAAALA). Positions 29 to 194 (FSDETLDKVA…DPTLDGVTDR (166 aa)) constitute a Reelin domain. Intrachain disulfides connect cysteine 44–cysteine 128, cysteine 156–cysteine 182, cysteine 199–cysteine 336, cysteine 200–cysteine 340, cysteine 202–cysteine 415, cysteine 443–cysteine 480, cysteine 454–cysteine 489, cysteine 459–cysteine 494, cysteine 502–cysteine 538, cysteine 513–cysteine 517, cysteine 548–cysteine 554, cysteine 559–cysteine 595, cysteine 570–cysteine 574, cysteine 605–cysteine 610, cysteine 615–cysteine 650, cysteine 626–cysteine 630, and cysteine 660–cysteine 665. The Spondin domain maps to 195–388 (PILDCCACGT…LTSLDHPQSP (194 aa)). A glycan (N-linked (GlcNAc...) asparagine) is linked at asparagine 214. Ca(2+)-binding residues include aspartate 325, aspartate 354, and aspartate 358. TSP type-1 domains are found at residues 442–495 (TCIY…PGCS), 501–555 (TCTM…EECS), 558–611 (SCLV…PECH), 614–666 (PCLL…PECP), and 668–721 (DCEL…RKCL). Asparagine 681 carries an N-linked (GlcNAc...) asparagine glycan. Over residues 732–746 (REARESRRSEQLREE) the composition is skewed to basic and acidic residues. Positions 732-752 (REARESRRSEQLREESDGEQF) are disordered. The TSP type-1 6 domain occupies 754 to 806 (GCRMRPWTAWSECTKLCGGGIQERYMTVKKRFKSSQFTSCKDKKEIRACNVHP).

As to quaternary structure, binds to the central extracellular domain of APP and inhibits beta-secretase cleavage of APP. In terms of tissue distribution, expressed at high levels in the floor plate.

It is found in the secreted. Its subcellular location is the extracellular space. The protein resides in the extracellular matrix. Cell adhesion protein that promotes the attachment of spinal cord and sensory neuron cells and the outgrowth of neurites in vitro. May contribute to the growth and guidance of axons in both the spinal cord and the PNS. The sequence is that of Spondin-1 (Spon1) from Rattus norvegicus (Rat).